We begin with the raw amino-acid sequence, 309 residues long: Taste receptor type 2 member 64 (309 aa).

The Extracellular segment spans residues 1-3 (MVY). A helical transmembrane segment spans residues 4 to 26 (FLLIILSILVVFAFVLGNFSNGF). The Cytoplasmic portion of the chain corresponds to 27–46 (VALVNVIDWVKTRKISSADQ). A helical transmembrane segment spans residues 47–69 (ILTALVVSRIGLLWVILFHWYAN). Residues 70 to 83 (VFNSALYSSEVGAV) are Extracellular-facing. A helical transmembrane segment spans residues 84–106 (ASNISAIINHFSIWLAASLGIFY). Topologically, residues 107–126 (LLKIANFSNLIFLHLKKRIR) are cytoplasmic. The chain crosses the membrane as a helical span at residues 127 to 149 (SVVLVILLGPLVFLICNLAVITM). Topologically, residues 150–176 (DERVWTKEYEGNVTWKIKLRNAIHLSD) are extracellular. N-linked (GlcNAc...) asparagine glycosylation is present at Asn-161. The helical transmembrane segment at 177-199 (LTVSTLANLIPFILTLICFLLLI) threads the bilayer. Residues 200 to 230 (CSLHKHLKKMQLHGKGSQDLSTKVHIKALQT) lie on the Cytoplasmic side of the membrane. Residues 231–253 (VISFLMLYAIYFLYLITLTWNLW) form a helical membrane-spanning segment. The Extracellular portion of the chain corresponds to 254–258 (TQQNK). The helical transmembrane segment at 259–281 (LVFLLCQTLGIMYPSFHSFFLIM) threads the bilayer. Topologically, residues 282 to 309 (GSRKLKQTFLSVLCQVTCLVKGQQPSTP) are cytoplasmic.

The protein belongs to the G-protein coupled receptor T2R family.

Its subcellular location is the membrane. In terms of biological role, receptor that may play a role in the perception of bitterness and is gustducin-linked. May play a role in sensing the chemical composition of the gastrointestinal content. The activity of this receptor may stimulate alpha gustducin, mediate PLC-beta-2 activation and lead to the gating of TRPM5. The chain is Taste receptor type 2 member 64 (TAS2R64) from Pan paniscus (Pygmy chimpanzee).